A 491-amino-acid polypeptide reads, in one-letter code: Cobyric acid synthase (491 aa).

The region spanning 246–432 (RKLIACPILP…VHGLLADAEL (187 aa)) is the GATase cobBQ-type domain. C328 serves as the catalytic Nucleophile. The active site involves H424.

The protein belongs to the CobB/CobQ family. CobQ subfamily.

The protein operates within cofactor biosynthesis; adenosylcobalamin biosynthesis. In terms of biological role, catalyzes amidations at positions B, D, E, and G on adenosylcobyrinic A,C-diamide. NH(2) groups are provided by glutamine, and one molecule of ATP is hydrogenolyzed for each amidation. The polypeptide is Cobyric acid synthase (Novosphingobium aromaticivorans (strain ATCC 700278 / DSM 12444 / CCUG 56034 / CIP 105152 / NBRC 16084 / F199)).